The primary structure comprises 1285 residues: Nuclear pore complex protein NUP133 (1285 aa).

Disordered stretches follow at residues 1–53 (MFSP…PAPW) and 522–580 (EPPE…QTAR). Over residues 31 to 41 (TPATQNRNNFI) the composition is skewed to polar residues. 2 stretches are compositionally biased toward basic and acidic residues: residues 523–544 (PPERSLSRKNSSNERSTRDETR) and 553–569 (TAGRENSDIQNIEDKGN).

Belongs to the nucleoporin Nup133 family. As to quaternary structure, part of the nuclear pore complex (NPC). The NPC has an eight-fold symmetrical structure comprising a central transport channel and two rings, the cytoplasmic and nuclear rings, to which eight filaments are attached. The cytoplasmic filaments have loose ends, while the nuclear filaments are joined in a distal ring, forming a nuclear basket. NPCs are highly dynamic in configuration and composition, and can be devided in 3 subcomplexes, the NUP62 subcomplex, the NUP107-160 subcomplex and the NUP93 subcomplex, containing approximately 30 different nucleoporin proteins.

Its subcellular location is the nucleus envelope. The protein localises to the nucleus. The protein resides in the nuclear pore complex. This chain is Nuclear pore complex protein NUP133, found in Arabidopsis thaliana (Mouse-ear cress).